Reading from the N-terminus, the 457-residue chain is Probable xyloglucan 6-xylosyltransferase 3 (457 aa).

The tract at residues 1 to 40 (MGKEDGFRTQKRVSTASSAAAGVLPTTMASGGVRRPPPRG) is disordered. At 1–51 (MGKEDGFRTQKRVSTASSAAAGVLPTTMASGGVRRPPPRGRQIQKTFNNVK) the chain is on the cytoplasmic side. The helical; Signal-anchor for type II membrane protein transmembrane segment at 52–71 (MTILCGFVTILVLRGTIGIN) threads the bilayer. The Lumenal segment spans residues 72–457 (FGTSDADVVN…TTPLKIEARS (386 aa)). 2 N-linked (GlcNAc...) asparagine glycosylation sites follow: asparagine 115 and asparagine 431.

It belongs to the glycosyltransferase 34 family.

The protein localises to the golgi apparatus membrane. It catalyses the reaction Transfers an alpha-D-xylosyl residue from UDP-D-xylose to a glucose residue in xyloglucan, forming an alpha-(1-&gt;6)-D-xylosyl-D-glucose linkage.. Probable xyloglucan xylosyltransferase involved in the biosynthesis of xyloglucan. The polypeptide is Probable xyloglucan 6-xylosyltransferase 3 (Arabidopsis thaliana (Mouse-ear cress)).